A 448-amino-acid polypeptide reads, in one-letter code: Ribosomal protein uS12 methylthiotransferase RimO (448 aa).

The MTTase N-terminal domain occupies 6 to 116 (PKVGIVSLGC…VVEAVHAAIP (111 aa)). Positions 15, 51, 80, 147, 151, and 154 each coordinate [4Fe-4S] cluster. Residues 133–371 (LTPHHYAYLK…EAARQIADER (239 aa)) form the Radical SAM core domain. Residues 373 to 439 (AAKEGTRIEV…DYDLWGDVVE (67 aa)) form the TRAM domain.

Belongs to the methylthiotransferase family. RimO subfamily. The cofactor is [4Fe-4S] cluster.

The protein resides in the cytoplasm. The catalysed reaction is L-aspartate(89)-[ribosomal protein uS12]-hydrogen + (sulfur carrier)-SH + AH2 + 2 S-adenosyl-L-methionine = 3-methylsulfanyl-L-aspartate(89)-[ribosomal protein uS12]-hydrogen + (sulfur carrier)-H + 5'-deoxyadenosine + L-methionine + A + S-adenosyl-L-homocysteine + 2 H(+). In terms of biological role, catalyzes the methylthiolation of an aspartic acid residue of ribosomal protein uS12. This chain is Ribosomal protein uS12 methylthiotransferase RimO, found in Paramagnetospirillum magneticum (strain ATCC 700264 / AMB-1) (Magnetospirillum magneticum).